Reading from the N-terminus, the 201-residue chain is MSKVLVLKSSILAGYSQSNQLSDYFVEQWREKHSADEITVRDLATNPIPVLDGELVGALRPSDAPLTPRQQEALALSDELIAELKAHDVIVIAAPMYNFNISTQLKNYFDLVARAGVTFRYTEKGPEGLVTGKKAIVITSRGGIHKDGPTDLVTPYLSTFLGFIGITDVKFVFAEGIAYGPEMAAKAQSDAKAAIDSIVAE.

Residues Ser-10, 16 to 18 (SQS), 96 to 99 (MYNF), and 140 to 143 (SRGG) contribute to the FMN site.

This sequence belongs to the azoreductase type 1 family. As to quaternary structure, homodimer. FMN is required as a cofactor.

The catalysed reaction is 2 a quinone + NADH + H(+) = 2 a 1,4-benzosemiquinone + NAD(+). It carries out the reaction N,N-dimethyl-1,4-phenylenediamine + anthranilate + 2 NAD(+) = 2-(4-dimethylaminophenyl)diazenylbenzoate + 2 NADH + 2 H(+). Functionally, quinone reductase that provides resistance to thiol-specific stress caused by electrophilic quinones. In terms of biological role, also exhibits azoreductase activity. Catalyzes the reductive cleavage of the azo bond in aromatic azo compounds to the corresponding amines. The sequence is that of FMN-dependent NADH:quinone oxidoreductase from Escherichia coli O6:H1 (strain CFT073 / ATCC 700928 / UPEC).